Here is a 439-residue protein sequence, read N- to C-terminus: FAD-linked oxidoreductase phmC (439 aa).

The N-terminal stretch at M1–A19 is a signal peptide. N-linked (GlcNAc...) asparagine glycosylation is found at N29 and N84. The FAD-binding PCMH-type domain occupies Q89–K272. Residues N285 and N300 are each glycosylated (N-linked (GlcNAc...) asparagine).

Belongs to the oxygen-dependent FAD-linked oxidoreductase family. It depends on FAD as a cofactor.

It functions in the pathway mycotoxin biosynthesis. FAD-linked oxidoreductase; part of the gene cluster that mediates the biosynthesis of the mycotoxins phomacins, leucine-derived cytochalasans with potent actin polymerization-inhibitory activities and monocot-specific antigerminative activities. The first step in the pathway is catalyzed by the hybrid PKS-NRPS phmA, assisted by the enoyl reductase phmE, that are responsible for fusion of the leucine precursor and the polyketide backbone to produce a 2-pyrrolidone intermediate. The polyketide synthase module (PKS) of phmA is responsible for the synthesis of the polyketide backbone and the downstream nonribosomal peptide synthetase (NRPS) amidates the carboxyl end of the polyketide with the leucine precursor. Because phmA lacks a designated enoylreductase (ER) domain, the required activity is provided the enoyl reductase phmE. Reduction by the hydrolyase phmG, followed by dehydration and intra-molecular Diels-Alder cyclization by the Diels-Alderase phmD then yield the required isoindolone-fused macrocycle. A number of oxidative steps catalyzed by the tailoring cytochrome P450 monooxygenase phmB, the FAD-linked oxidoreductase phmC and the short-chain dehydrogenase/reductase phmF, are further required to afford the final products, phomacin D and phomacin E. This Phaeosphaeria nodorum (strain SN15 / ATCC MYA-4574 / FGSC 10173) (Glume blotch fungus) protein is FAD-linked oxidoreductase phmC.